Reading from the N-terminus, the 185-residue chain is MIKDIIKNAEEKMQKTVTVLKSELGTMKAGRANPSMLDKIQIDYYGSMCPLSQAANISSPEPRVLMITPWEKQLLKEIEKAILKSDLGLNPSNDGSIIRLVIPELTEETRKDLVKKVKKTGEESKVAIRSIRRDANDKIKALKKDGDLSEDQVKKGEDDVQKKTDAIIKDIDKIIVDKEKEILAI.

Belongs to the RRF family.

It is found in the cytoplasm. In terms of biological role, responsible for the release of ribosomes from messenger RNA at the termination of protein biosynthesis. May increase the efficiency of translation by recycling ribosomes from one round of translation to another. The protein is Ribosome-recycling factor of Clostridium botulinum (strain Eklund 17B / Type B).